A 253-amino-acid chain; its full sequence is Indole-3-glycerol phosphate synthase (253 aa).

This sequence belongs to the TrpC family.

It carries out the reaction 1-(2-carboxyphenylamino)-1-deoxy-D-ribulose 5-phosphate + H(+) = (1S,2R)-1-C-(indol-3-yl)glycerol 3-phosphate + CO2 + H2O. It participates in amino-acid biosynthesis; L-tryptophan biosynthesis; L-tryptophan from chorismate: step 4/5. The protein is Indole-3-glycerol phosphate synthase of Bacillus cereus (strain G9842).